Here is a 134-residue protein sequence, read N- to C-terminus: Phosphoribosyl-AMP cyclohydrolase (134 aa).

A Mg(2+)-binding site is contributed by Asp78. Cys79 contacts Zn(2+). Mg(2+) contacts are provided by Asp80 and Asp82. Residues Cys96 and Cys103 each coordinate Zn(2+).

It belongs to the PRA-CH family. In terms of assembly, homodimer. The cofactor is Mg(2+). Zn(2+) serves as cofactor.

Its subcellular location is the cytoplasm. It catalyses the reaction 1-(5-phospho-beta-D-ribosyl)-5'-AMP + H2O = 1-(5-phospho-beta-D-ribosyl)-5-[(5-phospho-beta-D-ribosylamino)methylideneamino]imidazole-4-carboxamide. It participates in amino-acid biosynthesis; L-histidine biosynthesis; L-histidine from 5-phospho-alpha-D-ribose 1-diphosphate: step 3/9. Its function is as follows. Catalyzes the hydrolysis of the adenine ring of phosphoribosyl-AMP. In Cupriavidus taiwanensis (strain DSM 17343 / BCRC 17206 / CCUG 44338 / CIP 107171 / LMG 19424 / R1) (Ralstonia taiwanensis (strain LMG 19424)), this protein is Phosphoribosyl-AMP cyclohydrolase.